The chain runs to 91 residues: Putative pterin-4-alpha-carbinolamine dehydratase (91 aa).

The protein belongs to the pterin-4-alpha-carbinolamine dehydratase family.

It carries out the reaction (4aS,6R)-4a-hydroxy-L-erythro-5,6,7,8-tetrahydrobiopterin = (6R)-L-erythro-6,7-dihydrobiopterin + H2O. The chain is Putative pterin-4-alpha-carbinolamine dehydratase from Sulfolobus acidocaldarius (strain ATCC 33909 / DSM 639 / JCM 8929 / NBRC 15157 / NCIMB 11770).